The chain runs to 55 residues: UPF0434 protein BARBAKC583_1098 (55 aa).

It belongs to the UPF0434 family.

In Bartonella bacilliformis (strain ATCC 35685 / KC583 / Herrer 020/F12,63), this protein is UPF0434 protein BARBAKC583_1098.